Reading from the N-terminus, the 65-residue chain is DNA-directed RNA polymerase subunit Rpo10 (65 aa).

Cysteine 7, cysteine 10, cysteine 44, and cysteine 45 together coordinate Zn(2+).

Belongs to the archaeal Rpo10/eukaryotic RPB10 RNA polymerase subunit family. As to quaternary structure, part of the RNA polymerase complex. Requires Zn(2+) as cofactor.

It localises to the cytoplasm. The catalysed reaction is RNA(n) + a ribonucleoside 5'-triphosphate = RNA(n+1) + diphosphate. In terms of biological role, DNA-dependent RNA polymerase (RNAP) catalyzes the transcription of DNA into RNA using the four ribonucleoside triphosphates as substrates. The polypeptide is DNA-directed RNA polymerase subunit Rpo10 (Pyrococcus furiosus (strain ATCC 43587 / DSM 3638 / JCM 8422 / Vc1)).